Reading from the N-terminus, the 181-residue chain is Copper-resistant cuproprotein CopI (181 aa).

Residues methionine 1–alanine 24 form the signal peptide. Cu(2+) is bound by residues histidine 79, cysteine 163, histidine 168, and methionine 173.

This sequence belongs to the CopI family.

The protein localises to the periplasm. In terms of biological role, involved in copper tolerance. The polypeptide is Copper-resistant cuproprotein CopI (Pseudomonas aeruginosa (strain ATCC 15692 / DSM 22644 / CIP 104116 / JCM 14847 / LMG 12228 / 1C / PRS 101 / PAO1)).